Here is a 217-residue protein sequence, read N- to C-terminus: Putative peroxiredoxin Q, chloroplastic (217 aa).

Residues 1–66 (MAFAVSTACR…PSTTGRNRIV (66 aa)) constitute a chloroplast transit peptide. Residues 70 to 217 (VSKGSAAPNF…GETLKILQSL (148 aa)) enclose the Thioredoxin domain. The Cysteine sulfenic acid (-SOH) intermediate role is filled by Cys112. Cys112 and Cys117 are oxidised to a cystine.

Belongs to the peroxiredoxin family. BCP/PrxQ subfamily. As to quaternary structure, monomer.

The protein localises to the plastid. It is found in the chloroplast thylakoid lumen. It catalyses the reaction a hydroperoxide + [thioredoxin]-dithiol = an alcohol + [thioredoxin]-disulfide + H2O. Thiol-specific peroxidase that catalyzes the reduction of hydrogen peroxide and organic hydroperoxides to water and alcohols, respectively. Plays a role in cell protection against oxidative stress by detoxifying peroxides. The polypeptide is Putative peroxiredoxin Q, chloroplastic (Oryza sativa subsp. indica (Rice)).